The chain runs to 259 residues: Protein unc-50 homolog (259 aa).

Methionine 1 is subject to N-acetylmethionine. Topologically, residues 1–82 (MLPSTSLSSS…TKDQWARDDP (82 aa)) are cytoplasmic. Residue serine 6 is modified to Phosphoserine. Residues 83–103 (AFLVLLSIWLCVSTIGFGFVL) traverse the membrane as a helical segment. Residues 104–112 (DMGFFETIK) lie on the Lumenal side of the membrane. The helical transmembrane segment at 113-133 (LLLWVVFIDCVGVGLLISTLM) threads the bilayer. The Cytoplasmic portion of the chain corresponds to 134 to 163 (WFVSNKYLVKRQSRDYDVEWGYAFDVHLNA). The helical transmembrane segment at 164 to 184 (FYPLLVILHFIQLFFINHVIL) threads the bilayer. The Lumenal portion of the chain corresponds to 185 to 187 (TDT). A helical membrane pass occupies residues 188–208 (FIGYLVGNTLWLIAVGYYIYV). Residues 209 to 222 (TFLGYSALPFLKNT) are Cytoplasmic-facing. A helical transmembrane segment spans residues 223-243 (VILLYPFAPLMVLYGLSLALG). Over 244–259 (WNFTHTLCSFYKYRVK) the chain is Lumenal.

The protein belongs to the unc-50 family. In terms of tissue distribution, highly expressed in periodontal ligament and bone marrow, but not in gingival fibroblasts.

It localises to the nucleus inner membrane. The protein localises to the golgi apparatus membrane. In terms of biological role, involved in the cell surface expression of neuronal nicotinic receptors. Binds RNA. The polypeptide is Protein unc-50 homolog (Unc50) (Mus musculus (Mouse)).